Reading from the N-terminus, the 510-residue chain is ATP synthase subunit alpha (510 aa).

G169–T176 contacts ATP.

This sequence belongs to the ATPase alpha/beta chains family. As to quaternary structure, F-type ATPases have 2 components, CF(1) - the catalytic core - and CF(0) - the membrane proton channel. CF(1) has five subunits: alpha(3), beta(3), gamma(1), delta(1), epsilon(1). CF(0) has three main subunits: a(1), b(2) and c(9-12). The alpha and beta chains form an alternating ring which encloses part of the gamma chain. CF(1) is attached to CF(0) by a central stalk formed by the gamma and epsilon chains, while a peripheral stalk is formed by the delta and b chains.

The protein localises to the cell membrane. The enzyme catalyses ATP + H2O + 4 H(+)(in) = ADP + phosphate + 5 H(+)(out). In terms of biological role, produces ATP from ADP in the presence of a proton gradient across the membrane. The alpha chain is a regulatory subunit. The chain is ATP synthase subunit alpha from Buchnera aphidicola subsp. Schizaphis graminum (strain Sg).